Here is a 185-residue protein sequence, read N- to C-terminus: Large ribosomal subunit protein uL22 (185 aa).

It belongs to the universal ribosomal protein uL22 family. As to quaternary structure, part of the 50S ribosomal subunit.

This protein binds specifically to 23S rRNA. It makes multiple contacts with different domains of the 23S rRNA in the assembled 50S subunit and ribosome. Its function is as follows. The globular domain of the protein is located near the polypeptide exit tunnel on the outside of the subunit, while an extended beta-hairpin is found that lines the wall of the exit tunnel in the center of the 70S ribosome. The sequence is that of Large ribosomal subunit protein uL22 from Pyrobaculum islandicum (strain DSM 4184 / JCM 9189 / GEO3).